The chain runs to 251 residues: GTP cyclohydrolase 1 type 2 homolog (251 aa).

A divalent metal cation-binding residues include His64, His65, Asp102, His219, and Glu223.

It belongs to the GTP cyclohydrolase I type 2/NIF3 family. As to quaternary structure, homohexamer.

This chain is GTP cyclohydrolase 1 type 2 homolog, found in Chlamydia pneumoniae (Chlamydophila pneumoniae).